The following is a 103-amino-acid chain: Large ribosomal subunit protein bL21 (103 aa).

Belongs to the bacterial ribosomal protein bL21 family. Part of the 50S ribosomal subunit. Contacts protein L20.

This protein binds to 23S rRNA in the presence of protein L20. The protein is Large ribosomal subunit protein bL21 of Cupriavidus metallidurans (strain ATCC 43123 / DSM 2839 / NBRC 102507 / CH34) (Ralstonia metallidurans).